Reading from the N-terminus, the 275-residue chain is Large ribosomal subunit protein uL2 (275 aa).

The disordered stretch occupies residues 221–275 (RGTAMNPVDHPHGGGEGRTGEGRVPVNPWGQPTKGYRTRSNKRTNSMIVQRRHKR). The span at 229–241 (DHPHGGGEGRTGE) shows a compositional bias: basic and acidic residues.

Belongs to the universal ribosomal protein uL2 family. Part of the 50S ribosomal subunit. Forms a bridge to the 30S subunit in the 70S ribosome.

In terms of biological role, one of the primary rRNA binding proteins. Required for association of the 30S and 50S subunits to form the 70S ribosome, for tRNA binding and peptide bond formation. It has been suggested to have peptidyltransferase activity; this is somewhat controversial. Makes several contacts with the 16S rRNA in the 70S ribosome. The polypeptide is Large ribosomal subunit protein uL2 (Dechloromonas aromatica (strain RCB)).